Here is a 742-residue protein sequence, read N- to C-terminus: Alcohol dehydrogenase (quinone), dehydrogenase subunit (742 aa).

Positions 1 to 35 (MTRPASAKRRSLLGILAAGTICAAALPYAAVPARA) are cleaved as a signal peptide. Residue Glu96 participates in pyrroloquinoline quinone binding. Cysteines 142 and 143 form a disulfide. Residue Arg148 coordinates pyrroloquinoline quinone. Glu216 is a binding site for Ca(2+). Residue Thr278 participates in pyrroloquinoline quinone binding. The Ca(2+) site is built by Asn298 and Asp343. Asp343 acts as the Proton acceptor in catalysis. Pyrroloquinoline quinone contacts are provided by Lys370 and Ile584. The Cytochrome c domain maps to 636 to 715 (KVVDNGYFQY…AIRQYLIKRA (80 aa)). Cys649, Cys652, His653, and Met692 together coordinate heme c. Residues 722-732 (EVDARKNDKNI) show a composition bias toward basic and acidic residues. The interval 722 to 742 (EVDARKNDKNIPENPTLGINP) is disordered.

It belongs to the bacterial PQQ dehydrogenase family. As to quaternary structure, the alcohol dehydrogenase multicomponent enzyme system is composed of a dehydrogenase subunit I (AdhA) and a cytochrome c subunit II (AdhB). The cofactor is pyrroloquinoline quinone. It depends on Ca(2+) as a cofactor. Heme c serves as cofactor.

Its subcellular location is the cell membrane. The enzyme catalyses ethanol + a ubiquinone = a ubiquinol + acetaldehyde. Dehydrogenase component of the alcohol dehydrogenase multicomponent enzyme system which is involved in the production of acetic acid and in the ethanol oxidase respiratory chain. Quinohemoprotein alcohol dehydrogenase (ADH) catalyzes the oxidation of ethanol to acetaldehyde by transferring electrons to the ubiquinone embedded in the membrane phospholipids. The electrons transfer from ethanol to membranous ubiquinone occurs from pyrroloquinoline quinone (PQQ) to one heme c in subunit I (AdhA), and finally to two heme c in subunit II (AdhB). Besides ubiquinone reduction, ADH also has a ubiquinol (QH2) oxidation reaction which mediates electron transfer from ubiquinol to the non-energy generating bypass oxidase system. The electrons transfer occurs from ubiquinol (QH2) to the additional heme c within subunit II (AdhB). The protein is Alcohol dehydrogenase (quinone), dehydrogenase subunit of Acetobacter aceti.